Here is an 875-residue protein sequence, read N- to C-terminus: Neurotrypsin (875 aa).

The N-terminal stretch at Met1–Gly20 is a signal peptide. Residue Asn26 is glycosylated (N-linked (GlcNAc...) asparagine). The tract at residues Leu29–Pro68 is disordered. One can recognise a Kringle domain in the interval Cys93–Cys165. 20 disulfides stabilise this stretch: Cys93/Cys165, Cys109/Cys149, Cys138/Cys163, Cys195/Cys259, Cys208/Cys269, Cys239/Cys249, Cys305/Cys369, Cys318/Cys379, Cys349/Cys359, Cys412/Cys475, Cys425/Cys485, Cys455/Cys465, Cys525/Cys589, Cys538/Cys599, Cys569/Cys579, Cys619/Cys750, Cys661/Cys677, Cys765/Cys831, Cys794/Cys808, and Cys821/Cys850. 4 SRCR domains span residues Val170–Phe271, Ile280–Pro381, Ile387–Pro487, and Val500–Tyr601. Residues Cys619–Arg630 are zymogen activation region. One can recognise a Peptidase S1 domain in the interval Ile631–Lys874. His676 (charge relay system) is an active-site residue. A glycan (N-linked (GlcNAc...) asparagine) is linked at Asn683. The active-site Charge relay system is Asp726. Catalysis depends on Ser825, which acts as the Charge relay system.

This sequence belongs to the peptidase S1 family.

It localises to the secreted. Its function is as follows. Plays a role in neuronal plasticity and the proteolytic action may subserve structural reorganizations associated with learning and memory operations. The sequence is that of Neurotrypsin (PRSS12) from Trachypithecus phayrei (Phayre's leaf monkey).